The following is a 148-amino-acid chain: Snaclec crotocetin (148 aa).

An N-terminal signal peptide occupies residues 1–23 (MGRLVFVSFGLLVVFLSLTGTGA). Cystine bridges form between Cys27/Cys38, Cys55/Cys144, and Cys121/Cys136. The C-type lectin domain occupies 34–145 (YEGHCYKVFK…CSKTHKVVCK (112 aa)).

The protein belongs to the snaclec family. As to quaternary structure, heterodimer; disulfide-linked. Expressed by the venom gland.

Its subcellular location is the secreted. Interferes with one step of hemostasis (modulation of platelet aggregation, or coagulation cascade, for example). The protein is Snaclec crotocetin of Crotalus durissus terrificus (South American rattlesnake).